We begin with the raw amino-acid sequence, 416 residues long: Dihydroorotase (416 aa).

Histidine 53 and histidine 55 together coordinate Zn(2+). Residues 55–57 (HLR) and asparagine 87 each bind substrate. Zn(2+) contacts are provided by aspartate 145, histidine 172, histidine 225, and aspartate 298. Aspartate 298 is a catalytic residue. Histidine 302 contributes to the substrate binding site.

Belongs to the metallo-dependent hydrolases superfamily. DHOase family. Class I DHOase subfamily. It depends on Zn(2+) as a cofactor.

The enzyme catalyses (S)-dihydroorotate + H2O = N-carbamoyl-L-aspartate + H(+). Its pathway is pyrimidine metabolism; UMP biosynthesis via de novo pathway; (S)-dihydroorotate from bicarbonate: step 3/3. Its function is as follows. Catalyzes the reversible cyclization of carbamoyl aspartate to dihydroorotate. In Deinococcus radiodurans (strain ATCC 13939 / DSM 20539 / JCM 16871 / CCUG 27074 / LMG 4051 / NBRC 15346 / NCIMB 9279 / VKM B-1422 / R1), this protein is Dihydroorotase.